Here is a 151-residue protein sequence, read N- to C-terminus: Deoxyuridine 5'-triphosphate nucleotidohydrolase (151 aa).

Substrate-binding positions include 69–71 (RSG), N82, 86–88 (LID), and M96.

The protein belongs to the dUTPase family. The cofactor is Mg(2+).

It carries out the reaction dUTP + H2O = dUMP + diphosphate + H(+). Its pathway is pyrimidine metabolism; dUMP biosynthesis; dUMP from dCTP (dUTP route): step 2/2. Functionally, this enzyme is involved in nucleotide metabolism: it produces dUMP, the immediate precursor of thymidine nucleotides and it decreases the intracellular concentration of dUTP so that uracil cannot be incorporated into DNA. The protein is Deoxyuridine 5'-triphosphate nucleotidohydrolase of Blochmanniella floridana.